Consider the following 209-residue polypeptide: Uracil phosphoribosyltransferase (209 aa).

5-phospho-alpha-D-ribose 1-diphosphate-binding positions include R79, R104, and 131–139; that span reads DPMLATGGS. Uracil contacts are provided by residues I194 and 199-201; that span reads GDA. D200 contributes to the 5-phospho-alpha-D-ribose 1-diphosphate binding site.

The protein belongs to the UPRTase family. The cofactor is Mg(2+).

It carries out the reaction UMP + diphosphate = 5-phospho-alpha-D-ribose 1-diphosphate + uracil. The protein operates within pyrimidine metabolism; UMP biosynthesis via salvage pathway; UMP from uracil: step 1/1. Its activity is regulated as follows. Allosterically activated by GTP. Catalyzes the conversion of uracil and 5-phospho-alpha-D-ribose 1-diphosphate (PRPP) to UMP and diphosphate. The protein is Uracil phosphoribosyltransferase of Clostridium kluyveri (strain NBRC 12016).